The sequence spans 177 residues: Copper-binding regulatory protein cuf2 (177 aa).

Positions 1-40 form a DNA-binding region, copper-fist; that stretch reads MIIIDGKNYACVVCLRGHRGSSCQHQERALIEVRTRGRPL. Residues Cys11, Cys14, Cys23, and His25 each contribute to the Zn(2+) site.

It is found in the nucleus. This Schizosaccharomyces pombe (strain 972 / ATCC 24843) (Fission yeast) protein is Copper-binding regulatory protein cuf2 (cuf2).